The following is a 160-amino-acid chain: Cytochrome b6-f complex subunit 4 (160 aa).

3 helical membrane passes run 36–56 (LLYIFPVVILGTIACVVGLAV), 95–115 (LLGIALQTLIPLGLMILPFIE), and 131–151 (SLFLFGTVLTMYLGIGACLPI).

Belongs to the cytochrome b family. PetD subfamily. As to quaternary structure, the 4 large subunits of the cytochrome b6-f complex are cytochrome b6, subunit IV (17 kDa polypeptide, PetD), cytochrome f and the Rieske protein, while the 4 small subunits are PetG, PetL, PetM and PetN. The complex functions as a dimer.

The protein resides in the cellular thylakoid membrane. Its function is as follows. Component of the cytochrome b6-f complex, which mediates electron transfer between photosystem II (PSII) and photosystem I (PSI), cyclic electron flow around PSI, and state transitions. The sequence is that of Cytochrome b6-f complex subunit 4 from Prochlorococcus marinus (strain NATL2A).